Reading from the N-terminus, the 51-residue chain is Small ribosomal subunit protein uS14 (51 aa).

The Zn(2+) site is built by Cys16, Cys19, Cys34, and Cys37.

The protein belongs to the universal ribosomal protein uS14 family. Zinc-binding uS14 subfamily. As to quaternary structure, part of the 30S ribosomal subunit. Requires Zn(2+) as cofactor.

Functionally, binds 16S rRNA, required for the assembly of 30S particles. This is Small ribosomal subunit protein uS14 from Archaeoglobus fulgidus (strain ATCC 49558 / DSM 4304 / JCM 9628 / NBRC 100126 / VC-16).